Reading from the N-terminus, the 452-residue chain is Phosphatidylserine synthase 2 (452 aa).

The Cytoplasmic portion of the chain corresponds to M1–R35. A helical membrane pass occupies residues A36–E56. Residues E57–G69 lie on the Lumenal side of the membrane. A helical membrane pass occupies residues I70 to F90. The Cytoplasmic portion of the chain corresponds to T91–R99. The chain crosses the membrane as a helical span at residues F100 to V120. The Lumenal portion of the chain corresponds to H121 to R286. A helical membrane pass occupies residues W287–L307. A topological domain (cytoplasmic) is located at residue K308. The chain crosses the membrane as a helical span at residues F309–N329. Residues V330–K349 are Lumenal-facing. Residues K350–V370 form a helical membrane-spanning segment. At K371–T376 the chain is on the cytoplasmic side. The helical transmembrane segment at I377 to L397 threads the bilayer. At V398–S452 the chain is on the lumenal side. The segment at R419 to S452 is disordered. The segment covering S430–M444 has biased composition (polar residues).

Belongs to the phosphatidyl serine synthase family.

The protein localises to the endoplasmic reticulum membrane. The enzyme catalyses a 1,2-diacyl-sn-glycero-3-phosphoethanolamine + L-serine = a 1,2-diacyl-sn-glycero-3-phospho-L-serine + ethanolamine. It carries out the reaction 1-hexadecanoyl-2-(9Z-octadecenoyl)-sn-glycero-3-phosphoethanolamine + L-serine = 1-hexadecanoyl-2-(9Z-octadecenoyl)-sn-glycero-3-phospho-L-serine + ethanolamine. It catalyses the reaction 1-hexadecanoyl-2-(4Z,7Z,10Z,13Z,16Z,19Z-docosahexaenoyl)-sn-glycero-3-phosphoethanolamine + L-serine = 1-hexadecanoyl-2-(4Z,7Z,10Z,13Z,16Z,19Z-docosahexaenoyl)-sn-glycero-3-phosphoserine + ethanolamine. The catalysed reaction is 1-octadecanoyl-2-(5Z,8Z,11Z,14Z)-eicosatetraenoyl-sn-glycero-3-phosphoethanolamine + L-serine = 1-octadecanoyl-2-(5Z,8Z,11Z,14Z)-eicosatetraenoyl-sn-glycero-3-phosphoserine + ethanolamine. The enzyme catalyses 1-octadecanoyl-2-(4Z,7Z,10Z,13Z,16Z,19Z-docosahexaenoyl)-sn-glycero-3-phosphoethanolamine + L-serine = 1-octadecanoyl-2-(4Z,7Z,10Z,13Z,16Z,19Z-docosahexaenoyl)-sn-glycero-3-phosphoserine + ethanolamine. It carries out the reaction 1-(1Z-octadecenyl)-2-(4Z,7Z,10Z,13Z,16Z,19Z-docosahexaenoyl)-sn-glycero-3-phosphoethanolamine + L-serine = 1-(1Z-octadecenyl)-2-(4Z,7Z,10Z,13Z,16Z,19Z-docosahexaenoyl)-sn-glycero-3-phospho-L-serine + ethanolamine. It catalyses the reaction 1-octadecanoyl-2-(9Z-octadecenoyl)-sn-glycero-3-phosphoethanolamine + L-serine = 1-octadecanoyl-2-(9Z-octadecenoyl)-sn-glycero-3-phospho-L-serine + ethanolamine. The catalysed reaction is 1-(1Z-octadecenyl)-2-(9Z-octadecenoyl)-sn-glycero-3-phosphoethanolamine + L-serine = 1-(1Z-octadecenyl)-2-(9Z-octadecenoyl)-sn-glycero-3-phospho-L-serine + ethanolamine. The enzyme catalyses 1-(1Z-octadecenyl)-2-(5Z,8Z,11Z,14Z- eicosatetraenoyl)-sn-glycero-3-phosphoethanolamine + L-serine = 1-(1Z-octadecenyl)-2-(5Z,8Z,11Z,14Z-eicosatetraenoyl)-sn-glycero-3-phospho-L-serine + ethanolamine. Its pathway is phospholipid metabolism; phosphatidylserine biosynthesis. In terms of biological role, catalyzes a base-exchange reaction in which the polar head group of phosphatidylethanolamine (PE) or phosphatidylcholine (PC) is replaced by L-serine. Catalyzes the conversion of phosphatatidylethanolamine and does not act on phosphatidylcholine. Can utilize both phosphatidylethanolamine (PE) plasmalogen and diacyl PE as substrate and the latter is six times better utilized, indicating the importance of an ester linkage at the sn-1 position. Although it shows no sn-1 fatty acyl preference, exhibits significant preference towards docosahexaenoic acid (22:6n-3) compared with 18:1 or 20:4 at the sn-2 position. This chain is Phosphatidylserine synthase 2 (ptdss2), found in Danio rerio (Zebrafish).